The primary structure comprises 647 residues: Beta-glucosidase-like SFR2, chloroplastic (647 aa).

The tract at residues S116–Q140 is disordered. The segment covering S123–G132 has biased composition (polar residues). Residue N169 is glycosylated (N-linked (GlcNAc...) asparagine). Residues H258, N302 to E303, Y414, E466, W504, E511 to W512, and F520 contribute to the a beta-D-glucoside site. The active-site Proton donor is E303. Catalysis depends on E466, which acts as the Nucleophile.

The protein belongs to the glycosyl hydrolase 1 family.

It is found in the plastid. The protein localises to the chloroplast outer membrane. It catalyses the reaction 2 a 1,2-diacyl-3-O-(beta-D-galactosyl)-sn-glycerol = a 1,2-diacyl-3-O-[beta-D-galactosyl-(1-&gt;6)-beta-D-galactosyl]-sn-glycerol + a 1,2-diacyl-sn-glycerol. Functionally, galactosyltransferase synthesizing digalactosyldiacylglycerol from monogalactosyldiacylglycerol in the absence of UDP-galactose. Potentially involved in freezing tolerance. The protein is Beta-glucosidase-like SFR2, chloroplastic of Oryza sativa subsp. japonica (Rice).